Here is a 520-residue protein sequence, read N- to C-terminus: Peptidoglycan-recognition protein LC (520 aa).

2 stretches are compositionally biased toward polar residues: residues 1-14 (MPFS…QCSN) and 27-36 (KNCSTSSTDS). 2 disordered regions span residues 1–78 (MPFS…RISV) and 239–278 (DKWK…AQTP). The Cytoplasmic portion of the chain corresponds to 1–291 (MPFSNETEMS…PFLPNTVGRK (291 aa)). Basic and acidic residues-rich tracts occupy residues 48-58 (RPEKETKDRGT) and 66-78 (KSEE…RISV). Residues 292-312 (AVTVTVVFVTLTFLLGIVLAT) form a helical; Signal-anchor for type II membrane protein membrane-spanning segment. The Extracellular segment spans residues 313-520 (TTNLFGKTLN…ASFANWTHWS (208 aa)). An N-linked (GlcNAc...) asparagine glycan is attached at asparagine 389. A disulfide bond links cysteine 390 and cysteine 396. The N-acetylmuramoyl-L-alanine amidase domain occupies 412-490 (QKCDIAYNFL…KLGKIAPSYR (79 aa)). The N-linked (GlcNAc...) asparagine glycan is linked to asparagine 515.

This sequence belongs to the N-acetylmuramoyl-L-alanine amidase 2 family. Proteolytically cleaved, probably by a metaloprotease such as Mmp2; proteolytic cleavage leads to activation of the imd/Relish signaling pathway. Expressed in the fat body and hemocytes.

It is found in the membrane. Activated by proteolytic cleavage in response to Gram-negative bacterial infection; cleavage may be mediated by endogenous proteases, such as the metalloprotease Mmp2 or elastase, or by bacterially expressed proteases such as the surface serine protease OmpT. In terms of biological role, major activator of the imd/Relish pathway and is likely to encode a pattern recognition molecule for the humoral immune response. Required for Relish processing and nuclear translocation following proteolytic cleavage. Involved in the response to lipopolysaccharide (LPS) and peptidoglycan of Gram-negative bacteria. The different isoforms probably display different recognition capabilities to various microbial patterns. Its function is as follows. Mediates the response to LPS and Gram-negative bacteria. Mediates the response to LPS, peptidoglycan and Gram-negative bacteria. This is Peptidoglycan-recognition protein LC (PGRP-LC) from Drosophila melanogaster (Fruit fly).